A 278-amino-acid chain; its full sequence is Cytoplasmic envelopment protein 1 (278 aa).

It belongs to the herpesviridae cytoplasmic envelopment protein 1 family. As to quaternary structure, interacts with BSRF1 tegument protein; the BBRF2-BSRF1 complexes oligomerize and might play a role in tethering the viral nucleocapsids to the host Golgi membrane during secondary envelopment.

Its subcellular location is the virion. It localises to the virion tegument. The protein resides in the host cytoplasm. It is found in the host Golgi apparatus. In terms of biological role, plays a critical role in cytoplasmic virus egress. Participates in the final step of tegumentation and envelope acquisition within the host cytoplasm. The protein is Cytoplasmic envelopment protein 1 of Homo sapiens (Human).